Here is a 356-residue protein sequence, read N- to C-terminus: Phospho-N-acetylmuramoyl-pentapeptide-transferase (356 aa).

Helical transmembrane passes span 27 to 47 (ATLM…INML), 73 to 93 (TMGG…WMDL), 97 to 117 (FVWA…LDDL), 138 to 158 (FLVA…WLYV), 165 to 185 (AIPL…GAGN), 195 to 215 (GLAI…AYLA), 232 to 252 (AGEL…FLWF), 258 to 278 (AVFM…AIAV), 284 to 304 (IVLA…IIQV), and 333 to 353 (KVVI…LATL).

It belongs to the glycosyltransferase 4 family. MraY subfamily. The cofactor is Mg(2+).

It is found in the cell inner membrane. The catalysed reaction is UDP-N-acetyl-alpha-D-muramoyl-L-alanyl-gamma-D-glutamyl-meso-2,6-diaminopimeloyl-D-alanyl-D-alanine + di-trans,octa-cis-undecaprenyl phosphate = di-trans,octa-cis-undecaprenyl diphospho-N-acetyl-alpha-D-muramoyl-L-alanyl-D-glutamyl-meso-2,6-diaminopimeloyl-D-alanyl-D-alanine + UMP. Its pathway is cell wall biogenesis; peptidoglycan biosynthesis. Catalyzes the initial step of the lipid cycle reactions in the biosynthesis of the cell wall peptidoglycan: transfers peptidoglycan precursor phospho-MurNAc-pentapeptide from UDP-MurNAc-pentapeptide onto the lipid carrier undecaprenyl phosphate, yielding undecaprenyl-pyrophosphoryl-MurNAc-pentapeptide, known as lipid I. In Erythrobacter litoralis (strain HTCC2594), this protein is Phospho-N-acetylmuramoyl-pentapeptide-transferase.